The sequence spans 547 residues: Probable bifunctional tRNA threonylcarbamoyladenosine biosynthesis protein (547 aa).

Positions 1 to 329 are kae1; the sequence is MKNTFILGIE…FRTDDVNVTW (329 aa). Fe cation-binding residues include H113, H117, and Y134. L-threonylcarbamoyladenylate-binding positions include 134-138, D166, G179, E183, and N262; that span reads YVSGA. D290 serves as a coordination point for Fe cation. One can recognise a Protein kinase domain in the interval 340-547; that stretch reads EISPEAFLRA…EEIKKRARYA (208 aa). Residues 355–363 and K377 each bind ATP; that span reads LDNGAEAVI. D464 functions as the Proton acceptor; for kinase activity in the catalytic mechanism.

The protein in the N-terminal section; belongs to the KAE1 / TsaD family. It in the C-terminal section; belongs to the protein kinase superfamily. Tyr protein kinase family. BUD32 subfamily. Component of the KEOPS complex that consists of Kae1, Bud32, Cgi121 and Pcc1; the whole complex dimerizes. Fe(2+) is required as a cofactor.

Its subcellular location is the cytoplasm. The enzyme catalyses L-seryl-[protein] + ATP = O-phospho-L-seryl-[protein] + ADP + H(+). It catalyses the reaction L-threonyl-[protein] + ATP = O-phospho-L-threonyl-[protein] + ADP + H(+). The catalysed reaction is L-threonylcarbamoyladenylate + adenosine(37) in tRNA = N(6)-L-threonylcarbamoyladenosine(37) in tRNA + AMP + H(+). Required for the formation of a threonylcarbamoyl group on adenosine at position 37 (t(6)A37) in tRNAs that read codons beginning with adenine. Is a component of the KEOPS complex that is probably involved in the transfer of the threonylcarbamoyl moiety of threonylcarbamoyl-AMP (TC-AMP) to the N6 group of A37. The Kae1 domain likely plays a direct catalytic role in this reaction. The Bud32 domain probably displays kinase activity that regulates Kae1 function. In Methanosarcina acetivorans (strain ATCC 35395 / DSM 2834 / JCM 12185 / C2A), this protein is Probable bifunctional tRNA threonylcarbamoyladenosine biosynthesis protein.